Consider the following 153-residue polypeptide: MTHDNKLQVEAIKCGTVIDHIPAQVGFKLLSLFKLTETDQRITIGLNLPSGEMGRKDLIKIENTFLTEEQVNQLALYAPQATVNRIDNYDVVGKSRPSLPERINNVLVCPNSNCISHAEPVSSSFAVKKRANDIALKCKYCEKEFSHYVVLAN.

Residues cysteine 109, cysteine 114, cysteine 138, and cysteine 141 each contribute to the Zn(2+) site.

The protein belongs to the PyrI family. Contains catalytic and regulatory chains. It depends on Zn(2+) as a cofactor.

Involved in allosteric regulation of aspartate carbamoyltransferase. The protein is Aspartate carbamoyltransferase regulatory chain of Salmonella newport (strain SL254).